The primary structure comprises 246 residues: NAD-dependent protein deacylase (246 aa).

The region spanning 1–245 (MKEFITKHRD…ELIREILDNP (245 aa)) is the Deacetylase sirtuin-type domain. 20-39 (GAGISAESGIPTFRGSEGLW) provides a ligand contact to NAD(+). Substrate contacts are provided by tyrosine 64 and arginine 67. Residue 98-101 (QNVD) participates in NAD(+) binding. Catalysis depends on histidine 116, which acts as the Proton acceptor. Residues cysteine 124, cysteine 127, cysteine 146, and cysteine 149 each coordinate Zn(2+). NAD(+)-binding positions include 186 to 188 (GTS), 212 to 214 (NPE), and threonine 230.

The protein belongs to the sirtuin family. Class III subfamily. Zn(2+) serves as cofactor.

The protein localises to the cytoplasm. It catalyses the reaction N(6)-acetyl-L-lysyl-[protein] + NAD(+) + H2O = 2''-O-acetyl-ADP-D-ribose + nicotinamide + L-lysyl-[protein]. It carries out the reaction N(6)-succinyl-L-lysyl-[protein] + NAD(+) + H2O = 2''-O-succinyl-ADP-D-ribose + nicotinamide + L-lysyl-[protein]. In terms of biological role, NAD-dependent lysine deacetylase and desuccinylase that specifically removes acetyl and succinyl groups on target proteins. Modulates the activities of several proteins which are inactive in their acylated form. The chain is NAD-dependent protein deacylase from Leptospira interrogans serogroup Icterohaemorrhagiae serovar Lai (strain 56601).